The following is a 177-amino-acid chain: Transcription antitermination protein NusB (177 aa).

The interval 1-36 (MTEQPTKPTGSRPPRQPRTGLTSTGARKAGSKSDRS) is disordered.

Belongs to the NusB family.

Its function is as follows. Involved in transcription antitermination. Required for transcription of ribosomal RNA (rRNA) genes. Binds specifically to the boxA antiterminator sequence of the ribosomal RNA (rrn) operons. The polypeptide is Transcription antitermination protein NusB (Albidiferax ferrireducens (strain ATCC BAA-621 / DSM 15236 / T118) (Rhodoferax ferrireducens)).